We begin with the raw amino-acid sequence, 971 residues long: Piwi-like protein 2 (971 aa).

R45 is subject to Symmetric dimethylarginine. At R74 the chain carries Omega-N-methylarginine; by PRMT5; alternate. Symmetric dimethylarginine; by PRMT5; alternate is present on R74. Position 83 is an omega-N-methylarginine; alternate (R83). Residues R83 and R95 each carry the symmetric dimethylarginine; alternate modification. R95 carries the post-translational modification Omega-N-methylarginine; by PRMT5; alternate. Symmetric dimethylarginine; by PRMT5; alternate is present on R100. R100 is subject to Omega-N-methylarginine; alternate. The interval L102–L124 is disordered. Symmetric dimethylarginine is present on residues R144 and R156. Positions S159–P200 are disordered. At R163 the chain carries Symmetric dimethylarginine; by PRMT5. In terms of domain architecture, PAZ spans S387–G500. Position 549 is a symmetric dimethylarginine; by PRMT5 (R549). The Piwi domain occupies M666–H957. Active-site residues include D743, E781, D813, and H946.

Belongs to the argonaute family. Piwi subfamily. In terms of assembly, interacts with DDX4, MAEL, EIF3A, EIF4E, EIF4G, PRMT5 and WDR77. Associates with EIF4E- and EIF4G-containing m7G cap-binding complexes. Interacts (when methylated on arginine residues) with TDRD1 and TDRKH/TDRD2. Interacts with TDRD12. Component of the PET complex, at least composed of EXD1, PIWIL2, TDRD12 and piRNAs. Interacts with MOV10L1. Interacts with GPAT2. Interacts with Tex19.1 and, probably, Tex19.2. Interacts (via PIWI domain) with BMAL1 and CLOCK. Interacts with GSK3B. Interacts with TEX15. The cofactor is Mg(2+). Post-translationally, arginine methylation by PRMT5 is required for the interaction with Tudor domain-containing protein TDRD1 and subsequent localization to the meiotic nuage, also named P granule. As to expression, expressed in adult testis, specifically in spermatocytes and in spermatogonia. Only detected in primordial germ cells of both sexes. Widely expressed in tumors. Also present at early stages of oocyte growth. Present in the mitotic spermatogonia. Not detected in the first stages of meiosis (preleptotene and leptotene). Detected at the late zygotene stage and increases throughout pachytene, declining from this stage onward until expression stops at the early round spermatid stage (at protein level).

It is found in the cytoplasm. In terms of biological role, endoribonuclease that plays a central role during spermatogenesis by repressing transposable elements and preventing their mobilization, which is essential for the germline integrity. Plays an essential role in meiotic differentiation of spermatocytes, germ cell differentiation and in self-renewal of spermatogonial stem cells. Its presence in oocytes suggests that it may participate in similar functions during oogenesis in females. Acts via the piRNA metabolic process, which mediates the repression of transposable elements during meiosis by forming complexes composed of piRNAs and Piwi proteins and govern the methylation and subsequent repression of transposons. During piRNA biosynthesis, plays a key role in the piRNA amplification loop, also named ping-pong amplification cycle, by acting as a 'slicer-competent' piRNA endoribonuclease that cleaves primary piRNAs, which are then loaded onto 'slicer-incompetent' PIWIL4. PIWIL2 slicing produces a pre-miRNA intermediate, which is then processed in mature piRNAs, and as well as a 16 nucleotide by-product that is degraded. Required for PIWIL4/MIWI2 nuclear localization and association with secondary piRNAs antisense. Besides their function in transposable elements repression, piRNAs are probably involved in other processes during meiosis such as translation regulation. Indirectly modulates expression of genes such as PDGFRB, SLC2A1, ITGA6, GJA7, THY1, CD9 and STRA8. Represses circadian rhythms by promoting the stability and activity of core clock components BMAL1 and CLOCK by inhibiting GSK3B-mediated phosphorylation and ubiquitination-dependent degradation of these proteins. In Mus musculus (Mouse), this protein is Piwi-like protein 2.